Here is a 294-residue protein sequence, read N- to C-terminus: UDP-3-O-acyl-N-acetylglucosamine deacetylase (294 aa).

Positions 75, 232, and 236 each coordinate Zn(2+). The active-site Proton donor is His-259.

The protein belongs to the LpxC family. Requires Zn(2+) as cofactor.

The catalysed reaction is a UDP-3-O-[(3R)-3-hydroxyacyl]-N-acetyl-alpha-D-glucosamine + H2O = a UDP-3-O-[(3R)-3-hydroxyacyl]-alpha-D-glucosamine + acetate. It functions in the pathway glycolipid biosynthesis; lipid IV(A) biosynthesis; lipid IV(A) from (3R)-3-hydroxytetradecanoyl-[acyl-carrier-protein] and UDP-N-acetyl-alpha-D-glucosamine: step 2/6. Functionally, catalyzes the hydrolysis of UDP-3-O-myristoyl-N-acetylglucosamine to form UDP-3-O-myristoylglucosamine and acetate, the committed step in lipid A biosynthesis. In Campylobacter jejuni subsp. jejuni serotype O:6 (strain 81116 / NCTC 11828), this protein is UDP-3-O-acyl-N-acetylglucosamine deacetylase.